We begin with the raw amino-acid sequence, 406 residues long: MTGCSPVFAMQHVVGVPRILVRRTFLGTDVTMTRTLCSPGPREKRPEAAALGLFHRLPELGRTLSHTVRHQAASTAKAWWDRYEEFVGLNEVREAQGNVTEAEKVFMVARGLVREAREGLEAQQTKLKEVRDRLDRVSREDNQYLELATLEHRMLQEEKRLRIAYLRAEDSEREKFSLFSAAVRESHEKERTRAERTKNWSLIGSVLGALIGVAGSTYVNRVRLQELKALLLEAQKGPASLQEAIREQASSYSLQQKDLQDLMMDLRGLVHAEQGQGSGSPTGSSTRGKDIDGLSATMKEQLRHSRQVYSCLEGLREQLDGLEKTCSQMAGVLQLAQAPAHPGTVGPVDGALPSSLLEHGSVILALSEMEQRLEAQANRNTVSSTLVTCVTFLATLPLLYMLFKTS.

The N-terminal 35 residues, 1–35, are a transit peptide targeting the mitochondrion; the sequence is MTGCSPVFAMQHVVGVPRILVRRTFLGTDVTMTRT. Residues 36–198 lie on the Mitochondrial matrix side of the membrane; the sequence is LCSPGPREKR…KERTRAERTK (163 aa). Positions 113-140 form a coiled coil; it reads VREAREGLEAQQTKLKEVRDRLDRVSRE. Residues 199 to 219 traverse the membrane as a helical segment; the sequence is NWSLIGSVLGALIGVAGSTYV. Residues 220–382 are Mitochondrial intermembrane-facing; sequence NRVRLQELKA…LEAQANRNTV (163 aa). A helical transmembrane segment spans residues 383–403; that stretch reads SSTLVTCVTFLATLPLLYMLF. At 404 to 406 the chain is on the mitochondrial matrix side; sequence KTS.

The mitochondrial potassium channel (mitoK(ATP)) is composed of 4 subunits of CCDC51/MITOK and 4 subunits of ABCB8/MITOSUR.

It localises to the mitochondrion inner membrane. It carries out the reaction K(+)(in) = K(+)(out). Its activity is regulated as follows. Inhibited by ATP via mitoK(ATP) channel. In terms of biological role, pore-forming subunit of the mitochondrial ATP-gated potassium channel (mitoK(ATP)). Together with ATP-binding subunit ABCB8/MITOSUR of the mitoK(ATP) channel, mediates ATP-dependent K(+) currents across the mitochondrial inner membrane. An increase in ATP intracellular levels closes the channel, inhibiting K(+) transport, whereas a decrease in ATP levels enhances K(+) uptake in the mitochondrial matrix. May contribute to the homeostatic control of cellular metabolism under stress conditions by regulating the mitochondrial matrix volume. In Mus musculus (Mouse), this protein is Mitochondrial potassium channel.